A 241-amino-acid polypeptide reads, in one-letter code: Homeobox protein TGIF2LX (241 aa).

Disordered stretches follow at residues 1–58 and 126–209; these read MEAA…GNLP and TGKD…VSPE. Residues 21–39 are compositionally biased toward polar residues; the sequence is AKTQSPAQDTSIMSRNNAD. The segment at residues 48 to 111 is a DNA-binding region (homeobox; TALE-type); sequence EHKKKRKGNL…INARRRILPD (64 aa).

This sequence belongs to the TALE/TGIF homeobox family.

Its subcellular location is the nucleus. Its function is as follows. May have a transcription role in testis. This Gorilla gorilla gorilla (Western lowland gorilla) protein is Homeobox protein TGIF2LX (TGIF2LX).